We begin with the raw amino-acid sequence, 290 residues long: Signal recognition particle receptor FtsY (290 aa).

GTP contacts are provided by residues 91–98, 173–177, and 237–240; these read GTNGSGKT, DTSGR, and TKVD.

It belongs to the GTP-binding SRP family. FtsY subfamily. As to quaternary structure, part of the signal recognition particle protein translocation system, which is composed of SRP and FtsY.

Its subcellular location is the cell inner membrane. The protein localises to the cytoplasm. The catalysed reaction is GTP + H2O = GDP + phosphate + H(+). Functionally, involved in targeting and insertion of nascent membrane proteins into the cytoplasmic membrane. Acts as a receptor for the complex formed by the signal recognition particle (SRP) and the ribosome-nascent chain (RNC). The polypeptide is Signal recognition particle receptor FtsY (Chlamydia pneumoniae (Chlamydophila pneumoniae)).